A 161-amino-acid polypeptide reads, in one-letter code: Nucleotide-binding protein xcc-b100_3818 (161 aa).

It belongs to the YajQ family.

Its function is as follows. Nucleotide-binding protein. The polypeptide is Nucleotide-binding protein xcc-b100_3818 (Xanthomonas campestris pv. campestris (strain B100)).